A 472-amino-acid polypeptide reads, in one-letter code: 3-isopropylmalate dehydratase large subunit (472 aa).

3 residues coordinate [4Fe-4S] cluster: Cys-347, Cys-407, and Cys-410.

The protein belongs to the aconitase/IPM isomerase family. LeuC type 1 subfamily. In terms of assembly, heterodimer of LeuC and LeuD. It depends on [4Fe-4S] cluster as a cofactor.

It catalyses the reaction (2R,3S)-3-isopropylmalate = (2S)-2-isopropylmalate. It participates in amino-acid biosynthesis; L-leucine biosynthesis; L-leucine from 3-methyl-2-oxobutanoate: step 2/4. Catalyzes the isomerization between 2-isopropylmalate and 3-isopropylmalate, via the formation of 2-isopropylmaleate. In Bacillus licheniformis (strain ATCC 14580 / DSM 13 / JCM 2505 / CCUG 7422 / NBRC 12200 / NCIMB 9375 / NCTC 10341 / NRRL NRS-1264 / Gibson 46), this protein is 3-isopropylmalate dehydratase large subunit.